We begin with the raw amino-acid sequence, 177 residues long: Large ribosomal subunit protein uL6 (177 aa).

This sequence belongs to the universal ribosomal protein uL6 family. In terms of assembly, part of the 50S ribosomal subunit.

Its function is as follows. This protein binds to the 23S rRNA, and is important in its secondary structure. It is located near the subunit interface in the base of the L7/L12 stalk, and near the tRNA binding site of the peptidyltransferase center. This chain is Large ribosomal subunit protein uL6, found in Colwellia psychrerythraea (strain 34H / ATCC BAA-681) (Vibrio psychroerythus).